A 398-amino-acid polypeptide reads, in one-letter code: Beta-1,4-galactosyltransferase 1 (398 aa).

The Cytoplasmic segment spans residues 1 to 24; sequence MRLREPLLSGSAAMPGASLQRACR. The chain crosses the membrane as a helical; Signal-anchor for type II membrane protein span at residues 25–44; sequence LLVAVCALHLGVTLVYYLAG. Residues 45–398 are Lumenal-facing; it reads RDLSRLPQLV…QITVDIGTPS (354 aa). Polar residues predominate over residues 61-76; sequence QGGSNSAAAIGQSSGE. The disordered stretch occupies residues 61–117; sequence QGGSNSAAAIGQSSGELRTGGARPPPPLGASSQPRPGGDSSPVVDSGPGPASNLTSV. N-linked (GlcNAc...) asparagine glycosylation is present at Asn-113. Cys-130 and Cys-172 are oxidised to a cystine. UDP-alpha-D-galactose contacts are provided by residues 183-187, 222-224, 249-250, and Trp-310; these read PFRNR, FNR, and VD. Residues Cys-243 and Cys-262 are joined by a disulfide bond. Asp-250 is a Mn(2+) binding site. An N-acetyl-D-glucosamine-binding site is contributed by 312-315; sequence GEDD. His-343 contributes to the Mn(2+) binding site. Position 343–346 (343–346) interacts with UDP-alpha-D-galactose; the sequence is HSRD. Arg-355 serves as a coordination point for N-acetyl-D-glucosamine.

Belongs to the glycosyltransferase 7 family. As to quaternary structure, homodimer; and heterodimer with alpha-lactalbumin to form lactose synthase. Interacts (via N-terminal cytoplasmic domain) with UBE2Q1 (via N-terminus); the interaction is direct. It depends on Mn(2+) as a cofactor. The soluble form derives from the membrane forms by proteolytic processing. In terms of tissue distribution, ubiquitously expressed, but at very low levels in fetal and adult brain.

The protein resides in the golgi apparatus. It localises to the golgi stack membrane. The protein localises to the cell membrane. It is found in the cell surface. Its subcellular location is the cell projection. The protein resides in the filopodium. It localises to the secreted. It catalyses the reaction D-glucose + UDP-alpha-D-galactose = lactose + UDP + H(+). The enzyme catalyses an N-acetyl-beta-D-glucosaminyl derivative + UDP-alpha-D-galactose = a beta-D-galactosyl-(1-&gt;4)-N-acetyl-beta-D-glucosaminyl derivative + UDP + H(+). It carries out the reaction N-acetyl-D-glucosamine + UDP-alpha-D-galactose = beta-D-galactosyl-(1-&gt;4)-N-acetyl-D-glucosamine + UDP + H(+). The catalysed reaction is a beta-D-GlcNAc-(1-&gt;3)-beta-D-Gal-(1-&gt;4)-beta-D-Glc-(1&lt;-&gt;1)-Cer(d18:1(4E)) + UDP-alpha-D-galactose = a neolactoside nLc4Cer(d18:1(4E)) + UDP + H(+). It catalyses the reaction a beta-D-glucosylceramide + UDP-alpha-D-galactose = a beta-D-galactosyl-(1-&gt;4)-beta-D-glucosyl-(1&lt;-&gt;1)-ceramide + UDP + H(+). The enzyme catalyses a neolactoside IV(3)-beta-GlcNAc-nLc4Cer + UDP-alpha-D-galactose = a neolactoside nLc6Cer + UDP + H(+). Its pathway is protein modification; protein glycosylation. In terms of biological role, the Golgi complex form catalyzes the production of lactose in the lactating mammary gland and could also be responsible for the synthesis of complex-type N-linked oligosaccharides in many glycoproteins as well as the carbohydrate moieties of glycolipids. The cell surface form functions as a recognition molecule during a variety of cell to cell and cell to matrix interactions, as those occurring during development and egg fertilization, by binding to specific oligosaccharide ligands on opposing cells or in the extracellular matrix. The polypeptide is Beta-1,4-galactosyltransferase 1 (Homo sapiens (Human)).